We begin with the raw amino-acid sequence, 401 residues long: Cysteine desulfurase (401 aa).

Pyridoxal 5'-phosphate-binding positions include 72-73 (AT), N151, Q179, and 199-201 (SAH). K202 bears the N6-(pyridoxal phosphate)lysine mark. T237 contacts pyridoxal 5'-phosphate. The active-site Cysteine persulfide intermediate is the C324. C324 contributes to the [2Fe-2S] cluster binding site.

The protein belongs to the class-V pyridoxal-phosphate-dependent aminotransferase family. NifS/IscS subfamily. As to quaternary structure, homodimer. Pyridoxal 5'-phosphate is required as a cofactor.

The enzyme catalyses (sulfur carrier)-H + L-cysteine = (sulfur carrier)-SH + L-alanine. In terms of biological role, catalyzes the removal of elemental sulfur atoms from cysteine to produce alanine. Seems to participate in the biosynthesis of the nitrogenase metalloclusters by providing the inorganic sulfur required for the Fe-S core formation. The protein is Cysteine desulfurase of Enterobacter agglomerans (Erwinia herbicola).